A 201-amino-acid polypeptide reads, in one-letter code: MRTLKSLVIVSAALLPFSATAFAADAIQEQPPVPAPVEVAPQYSWAGGYTGLYLGYGWNKAKTSTVGSIKPDDWKAGAFAGWNFQQDQIVYGVEGNAGYSWAKKSKDGLEVKQGFEGSLRARVGYDLNPVMPYLTAGIAGSQIKLNNGLDDESKFRVGWTAGAGLEAKLTDNILGRVEYRYTQYGNKLDTQDIRVGIGYKF.

The N-terminal stretch at 1 to 23 (MRTLKSLVIVSAALLPFSATAFA) is a signal peptide.

This sequence belongs to the Omp25/RopB family.

The protein resides in the cell outer membrane. This chain is 25 kDa outer-membrane immunogenic protein (omp25), found in Brucella ovis (strain ATCC 25840 / 63/290 / NCTC 10512).